The following is a 79-amino-acid chain: uncharacterized protein (79 aa).

A helical membrane pass occupies residues 15–37 (KSIVSVLALTSLGCGVFVISATA).

Its subcellular location is the membrane. This is an uncharacterized protein from Dictyostelium discoideum (Social amoeba).